Reading from the N-terminus, the 515-residue chain is Galactokinase (515 aa).

Arg-48, Asp-54, His-55, and Asp-57 together coordinate alpha-D-galactose. Positions 155, 157, 159, and 160 each coordinate ATP. Asp-205 is an alpha-D-galactose binding site. The active-site Proton acceptor is the Asp-205. ATP is bound by residues Ser-249, Asn-250, and Lys-251. Residue Tyr-259 coordinates alpha-D-galactose.

It belongs to the GHMP kinase family. GalK subfamily.

It carries out the reaction alpha-D-galactose + ATP = alpha-D-galactose 1-phosphate + ADP + H(+). Its pathway is carbohydrate metabolism; galactose metabolism. In terms of biological role, galactokinase is a key enzyme in the galactose metabolism where it catalyzes the conversion of alpha-D-galactose to galactose 1-phosphate. Can also induce the transcription of the gal genes in response to the organism being challenged with galactose as the sole source of carbon. The protein is Galactokinase of Candida albicans (Yeast).